The chain runs to 266 residues: Putative carbamate hydrolase RutD (266 aa).

Belongs to the AB hydrolase superfamily. Hydrolase RutD family.

It catalyses the reaction carbamate + 2 H(+) = NH4(+) + CO2. Its function is as follows. Involved in pyrimidine catabolism. May facilitate the hydrolysis of carbamate, a reaction that can also occur spontaneously. The sequence is that of Putative carbamate hydrolase RutD from Escherichia coli O45:K1 (strain S88 / ExPEC).